Reading from the N-terminus, the 191-residue chain is MSSESKLSQSEKELSGLVLEQKIKGSRKVSNYLVASMLSIGGVGFLLASFSSYFGRDFLPLGNPSTLIFVPQGLVMGLYGVAAFLLAIYFWRLINIDYGSGVNRFDKNKGVLSLSRRGLFKNIEIEIPIDEIKAVKLEVREGFNPLRRVSLRIKGRKDLPISRVGSPQPLLDLENEGAEIARFLEVNLEGI.

The next 2 membrane-spanning stretches (helical) occupy residues 34–54 and 68–88; these read VASM…SSYF and IFVP…LLAI.

The protein belongs to the Ycf4 family.

It localises to the cellular thylakoid membrane. Its function is as follows. Seems to be required for the assembly of the photosystem I complex. In Prochlorococcus marinus (strain NATL2A), this protein is Photosystem I assembly protein Ycf4.